The chain runs to 229 residues: Growth factor receptor-bound protein 2 (229 aa).

SH3 domains lie at 1 to 58 (MEAV…MKPH) and 168 to 227 (QQPT…PVNR). Residues 60 to 171 (WFFGKIPRAK…RATNLLQQPT (112 aa)) enclose the SH2 domain.

The protein resides in the nucleus. It is found in the cytoplasm. Its subcellular location is the endosome. It localises to the golgi apparatus. Adapter protein that provides a critical link between cell surface growth factor receptors and the Ras signaling pathway. Promotes meiotic reinitiation during oocyte maturation. In Xenopus tropicalis (Western clawed frog), this protein is Growth factor receptor-bound protein 2.